The primary structure comprises 539 residues: Acid-sensing ion channel 4 (539 aa).

Topologically, residues 1-68 are cytoplasmic; the sequence is MPIEIVCKIK…GPGPHGLRRT (68 aa). Residues 69-89 traverse the membrane as a helical segment; it reads LWALALLTSLAAFLYQAAGLA. The Extracellular portion of the chain corresponds to 90–438; sequence RGYLTRPHLV…EQRAAYGLSA (349 aa). 2 cysteine pairs are disulfide-bonded: Cys118/Cys202 and Cys180/Cys187. Asn191 and Asn243 each carry an N-linked (GlcNAc...) asparagine glycan. Cystine bridges form between Cys296/Cys375, Cys318/Cys371, Cys322/Cys369, Cys331/Cys353, and Cys333/Cys345. N-linked (GlcNAc...) asparagine glycosylation occurs at Asn376. The chain crosses the membrane as a helical span at residues 439–459; it reads LLGDLGGQMGLFIGASILTLL. The short motif at 452 to 454 is the GAS motif; ion selectivity filter element; sequence GAS. Residues 460–539 are Cytoplasmic-facing; it reads EILDYIYEVS…PGGLFEDFAC (80 aa). A disordered region spans residues 501 to 531; that stretch reads EQSPCPSRGRVEGGGVSSLLPNHHHPHGPPG.

Belongs to the amiloride-sensitive sodium channel (TC 1.A.6) family. ASIC4 subfamily. Homotrimer. Heterotrimer; with other ASIC proteins producing functional channels. Expressed in pituitary gland. Weakly expressed in brain, vestibular system and organ of Corti.

It localises to the cell membrane. Does not exhibit measurable stand-alone pH-gated sodium channel activity but may form pH-gated heterotrimeric sodium channels. Its activity could also depend on alternative gating mechanisms. The polypeptide is Acid-sensing ion channel 4 (Homo sapiens (Human)).